The sequence spans 852 residues: Protein SEY1 (852 aa).

Topologically, residues 1-738 are cytoplasmic; the sequence is MNGHFAAVGN…KRSAIGGITQ (738 aa). The region spanning 47-283 is the GB1/RHD3-type G domain; it reads GFNYHLISVF…FVGGVFLPEY (237 aa). 57-64 provides a ligand contact to GTP; sequence GSQSTGKS. A coiled-coil region spans residues 475 to 500; the sequence is QYRLFEKELDEVSARLRKEEMRRLAI. A helical transmembrane segment spans residues 739-759; sequence VPLYFYIVLLIFGWNEIVMVL. Residues 760–762 are Lumenal-facing; that stretch reads RNP. Residues 763 to 783 traverse the membrane as a helical segment; it reads MLFMLLLVMGGGTYVAYTLNL. Topologically, residues 784–852 are cytoplasmic; the sequence is LGPMMQMANA…AQEVEEDDDI (69 aa). The tract at residues 825–852 is disordered; that stretch reads RSQDNGIGMDRLDSRGKKAQEVEEDDDI. The segment covering 834-845 has biased composition (basic and acidic residues); that stretch reads DRLDSRGKKAQE.

It belongs to the TRAFAC class dynamin-like GTPase superfamily. GB1/RHD3 GTPase family. RHD3 subfamily.

The protein localises to the endoplasmic reticulum membrane. Cooperates with the reticulon proteins and tubule-shaping DP1 family proteins to generate and maintain the structure of the tubular endoplasmic reticulum network. Has GTPase activity, which is required for its function in ER organization. In Chaetomium globosum (strain ATCC 6205 / CBS 148.51 / DSM 1962 / NBRC 6347 / NRRL 1970) (Soil fungus), this protein is Protein SEY1.